The sequence spans 595 residues: Isoprene synthase, chloroplastic (595 aa).

The N-terminal 37 residues, methionine 1–arginine 37, are a transit peptide targeting the chloroplast. Residue aspartate 345 coordinates dimethylallyl diphosphate. Mg(2+)-binding residues include aspartate 345 and aspartate 349. The DDXXD motif motif lies at aspartate 345–aspartate 349. Positions 423, 486, and 489 each coordinate dimethylallyl diphosphate. Positions 489, 493, and 497 each coordinate Mg(2+).

Belongs to the terpene synthase family. Tpsb subfamily. The cofactor is Mg(2+). As to expression, predominantly expressed in leaves.

Its subcellular location is the plastid. It localises to the chloroplast. The catalysed reaction is dimethylallyl diphosphate = isoprene + diphosphate. The protein operates within terpene metabolism. In terms of biological role, lyase that catalyzes the formation of isoprene from dimethylallyl diphosphate, but not from isopentenyl diphosphate or geranyl diphosphate. The sequence is that of Isoprene synthase, chloroplastic from Populus alba (White poplar).